Reading from the N-terminus, the 166-residue chain is Endoribonuclease YbeY (166 aa).

Zn(2+) contacts are provided by histidine 111, histidine 115, and histidine 121. The segment at 141–166 is disordered; that stretch reads LGYPDPYAEDESADHPHSDTPSKDHE. The segment covering 153–166 has biased composition (basic and acidic residues); that stretch reads ADHPHSDTPSKDHE.

This sequence belongs to the endoribonuclease YbeY family. Zn(2+) serves as cofactor.

It localises to the cytoplasm. Single strand-specific metallo-endoribonuclease involved in late-stage 70S ribosome quality control and in maturation of the 3' terminus of the 16S rRNA. This Pseudomonas savastanoi pv. phaseolicola (strain 1448A / Race 6) (Pseudomonas syringae pv. phaseolicola (strain 1448A / Race 6)) protein is Endoribonuclease YbeY.